Reading from the N-terminus, the 247-residue chain is O-methyltransferase imqG (247 aa).

Residues Glu84, 86–87, and Ala138 contribute to the S-adenosyl-L-methionine site; that span reads GT. Positions 163, 189, and 190 each coordinate a divalent metal cation. Asp163 is a substrate binding site.

Belongs to the class I-like SAM-binding methyltransferase superfamily. Cation-dependent O-methyltransferase family. CCoAMT subfamily. In terms of assembly, homodimer. Requires a divalent metal cation as cofactor.

It participates in secondary metabolite biosynthesis. O-methyltransferase; part of the gene cluster that mediates the biosynthesis of imizoquins A to D, tripeptide-derived alkaloids that serve a protective role against oxidative stress that are essential for normal germination. ImqB is a canonical three-module NRPS that assembles the tripeptide backbone of the imizoquins via condensation of Trp, Tyr, and Leu-derived precursors. N-methylation by imqF and phenol oxidation by imqC, followed by cyclization via the FAD-dependent oxidase imqH carry out the three-step transformation of L-tyrosine into tetrahydroisoquinoline. Importantly, this sequence requires the presence of a free amine in the tyrosine moiety, indicating that isoquinoline formation occurs prior to peptide bond formation. The imidazolidin-4-one ring of imizoquins could form following additional oxidation of the methyl-derived bridgehead carbon by imqH. Lastly, O-methylation by imqG and leucine hydroxylation by imqE complete biosynthesis of the imizoquins. This chain is O-methyltransferase imqG, found in Aspergillus flavus (strain ATCC 200026 / FGSC A1120 / IAM 13836 / NRRL 3357 / JCM 12722 / SRRC 167).